The following is a 343-amino-acid chain: Multidrug resistance protein MdtN (343 aa).

The Cytoplasmic segment spans residues 1–12 (MESTPKKAPRSK). A helical; Signal-anchor for type II membrane protein membrane pass occupies residues 13 to 33 (FPALLVVALALVALVFVIWRV). At 34–343 (DSAPSTNDAY…ASAVANLEPQ (310 aa)) the chain is on the periplasmic side.

This sequence belongs to the membrane fusion protein (MFP) (TC 8.A.1) family. Could be part of a tripartite efflux system composed of MdtN, MdtO and MdtP.

The protein localises to the cell inner membrane. In terms of biological role, could be involved in resistance to puromycin, acriflavine and tetraphenylarsonium chloride. This chain is Multidrug resistance protein MdtN (mdtN), found in Escherichia coli O6:H1 (strain CFT073 / ATCC 700928 / UPEC).